The sequence spans 293 residues: Ribosomal protein L11 methyltransferase (293 aa).

Residues T145, G166, D188, and N230 each contribute to the S-adenosyl-L-methionine site.

It belongs to the methyltransferase superfamily. PrmA family.

Its subcellular location is the cytoplasm. It carries out the reaction L-lysyl-[protein] + 3 S-adenosyl-L-methionine = N(6),N(6),N(6)-trimethyl-L-lysyl-[protein] + 3 S-adenosyl-L-homocysteine + 3 H(+). Its function is as follows. Methylates ribosomal protein L11. This Salmonella arizonae (strain ATCC BAA-731 / CDC346-86 / RSK2980) protein is Ribosomal protein L11 methyltransferase.